The sequence spans 295 residues: Elongation factor Ts (295 aa).

The tract at residues 79-82 is involved in Mg(2+) ion dislocation from EF-Tu; that stretch reads TDFV.

It belongs to the EF-Ts family.

The protein localises to the cytoplasm. In terms of biological role, associates with the EF-Tu.GDP complex and induces the exchange of GDP to GTP. It remains bound to the aminoacyl-tRNA.EF-Tu.GTP complex up to the GTP hydrolysis stage on the ribosome. This Bacillus anthracis (strain A0248) protein is Elongation factor Ts.